Reading from the N-terminus, the 476-residue chain is Trigger factor (476 aa).

The PPIase FKBP-type domain occupies 169 to 254 (GDKVTLDYVG…VKEVAAAEEL (86 aa)). The interval 437 to 476 (SRDELLAEDEAEGEEKKAAGETKKKAAPKKKAAKKESAAE) is disordered. The span at 450–460 (EEKKAAGETKK) shows a compositional bias: basic and acidic residues.

This sequence belongs to the FKBP-type PPIase family. Tig subfamily.

It localises to the cytoplasm. The enzyme catalyses [protein]-peptidylproline (omega=180) = [protein]-peptidylproline (omega=0). Functionally, involved in protein export. Acts as a chaperone by maintaining the newly synthesized protein in an open conformation. Functions as a peptidyl-prolyl cis-trans isomerase. The chain is Trigger factor from Chelativorans sp. (strain BNC1).